The primary structure comprises 257 residues: UPF0259 membrane protein WIGBR3650 (257 aa).

The next 6 helical transmembrane spans lie at 23 to 43, 89 to 109, 122 to 142, 148 to 168, 190 to 210, and 223 to 243; these read IIFFSTISAIISSLINYIFLP, LSSLVGNAFLFSNIITMINTI, IILSSSLIPKFLTLIFLISFL, ALMLIPGIIVLIFLSFSPILI, IKTVAPIIFLWLLIKLIILVI, and VKIFFYLINNIITVYIIIYMY.

The protein belongs to the UPF0259 family.

It is found in the cell membrane. The chain is UPF0259 membrane protein WIGBR3650 from Wigglesworthia glossinidia brevipalpis.